A 361-amino-acid chain; its full sequence is Beta-hexosaminidase (361 aa).

Substrate-binding positions include D69, R77, R144, and 174 to 175; that span reads KH. H187 (proton donor/acceptor) is an active-site residue. D258 (nucleophile) is an active-site residue.

The protein belongs to the glycosyl hydrolase 3 family. NagZ subfamily.

The protein localises to the cytoplasm. It carries out the reaction Hydrolysis of terminal non-reducing N-acetyl-D-hexosamine residues in N-acetyl-beta-D-hexosaminides.. Its pathway is cell wall biogenesis; peptidoglycan recycling. Its function is as follows. Plays a role in peptidoglycan recycling by cleaving the terminal beta-1,4-linked N-acetylglucosamine (GlcNAc) from peptide-linked peptidoglycan fragments, giving rise to free GlcNAc, anhydro-N-acetylmuramic acid and anhydro-N-acetylmuramic acid-linked peptides. In Neisseria meningitidis serogroup B (strain ATCC BAA-335 / MC58), this protein is Beta-hexosaminidase.